A 238-amino-acid chain; its full sequence is Probable metal transport system ATP-binding protein TP_0035 (238 aa).

Residues 10 to 231 (VLLQNVSFRY…LDMQKKDALA (222 aa)) enclose the ABC transporter domain. 44-51 (GENGSGKS) contributes to the ATP binding site.

This sequence belongs to the ABC transporter superfamily.

It is found in the cell inner membrane. Its function is as follows. Part of an ATP-driven transport system TP_0034/TP_0035/TP_0036 for a metal. Probably responsible for energy coupling to the transport system. This Treponema pallidum (strain Nichols) protein is Probable metal transport system ATP-binding protein TP_0035.